A 170-amino-acid polypeptide reads, in one-letter code: ATP synthase subunit b (170 aa).

Residues 15–37 traverse the membrane as a helical segment; the sequence is LNLFETNVLNWAVVVFGLYKFLP.

Belongs to the ATPase B chain family. As to quaternary structure, F-type ATPases have 2 components, F(1) - the catalytic core - and F(0) - the membrane proton channel. F(1) has five subunits: alpha(3), beta(3), gamma(1), delta(1), epsilon(1). F(0) has four main subunits: a(1), b(1), b'(1) and c(10-14). The alpha and beta chains form an alternating ring which encloses part of the gamma chain. F(1) is attached to F(0) by a central stalk formed by the gamma and epsilon chains, while a peripheral stalk is formed by the delta, b and b' chains.

The protein localises to the cellular thylakoid membrane. In terms of biological role, f(1)F(0) ATP synthase produces ATP from ADP in the presence of a proton or sodium gradient. F-type ATPases consist of two structural domains, F(1) containing the extramembraneous catalytic core and F(0) containing the membrane proton channel, linked together by a central stalk and a peripheral stalk. During catalysis, ATP synthesis in the catalytic domain of F(1) is coupled via a rotary mechanism of the central stalk subunits to proton translocation. Its function is as follows. Component of the F(0) channel, it forms part of the peripheral stalk, linking F(1) to F(0). This is ATP synthase subunit b from Prochlorococcus marinus (strain MIT 9515).